The following is a 305-amino-acid chain: UDP-N-acetylenolpyruvoylglucosamine reductase 2 (305 aa).

Positions 33 to 197 (VGGKADVFVA…LEARFELEEG (165 aa)) constitute an FAD-binding PCMH-type domain. The active site involves R176. The Proton donor role is filled by S226. E296 is an active-site residue.

The protein belongs to the MurB family. FAD is required as a cofactor.

Its subcellular location is the cytoplasm. It carries out the reaction UDP-N-acetyl-alpha-D-muramate + NADP(+) = UDP-N-acetyl-3-O-(1-carboxyvinyl)-alpha-D-glucosamine + NADPH + H(+). The protein operates within cell wall biogenesis; peptidoglycan biosynthesis. Its function is as follows. Cell wall formation. The chain is UDP-N-acetylenolpyruvoylglucosamine reductase 2 from Bacillus cereus (strain ZK / E33L).